The following is a 364-amino-acid chain: Tyrosine--tRNA ligase (364 aa).

Positions 41, 167, 171, 174, and 189 each coordinate L-tyrosine. Positions 238-242 (KMSKS) match the 'KMSKS' region motif. Lysine 241 contacts ATP.

This sequence belongs to the class-I aminoacyl-tRNA synthetase family. TyrS type 4 subfamily. As to quaternary structure, homodimer.

The protein localises to the cytoplasm. The catalysed reaction is tRNA(Tyr) + L-tyrosine + ATP = L-tyrosyl-tRNA(Tyr) + AMP + diphosphate + H(+). Catalyzes the attachment of tyrosine to tRNA(Tyr) in a two-step reaction: tyrosine is first activated by ATP to form Tyr-AMP and then transferred to the acceptor end of tRNA(Tyr). In Sulfurisphaera tokodaii (strain DSM 16993 / JCM 10545 / NBRC 100140 / 7) (Sulfolobus tokodaii), this protein is Tyrosine--tRNA ligase.